The sequence spans 310 residues: Olfactory receptor 4K14 (310 aa).

Over methionine 1–asparagine 25 the chain is Extracellular. Residue asparagine 5 is glycosylated (N-linked (GlcNAc...) asparagine). Residues phenylalanine 26–valine 49 traverse the membrane as a helical segment. At isoleucine 50–serine 58 the chain is on the cytoplasmic side. The chain crosses the membrane as a helical span at residues proline 59–proline 80. Topologically, residues lysine 81–glutamine 101 are extracellular. An intrachain disulfide couples cysteine 98 to cysteine 190. A helical transmembrane segment spans residues isoleucine 102 to tyrosine 121. At aspartate 122–glutamine 140 the chain is on the cytoplasmic side. The chain crosses the membrane as a helical span at residues threonine 141–serine 159. Over glutamine 160–leucine 196 the chain is Extracellular. A helical membrane pass occupies residues glycine 197–threonine 220. The Cytoplasmic segment spans residues valine 221–lysine 236. The chain crosses the membrane as a helical span at residues alanine 237–tyrosine 259. The Extracellular segment spans residues valine 260 to lysine 270. Residues leucine 271 to leucine 290 form a helical membrane-spanning segment. At arginine 291–glutamine 310 the chain is on the cytoplasmic side.

Belongs to the G-protein coupled receptor 1 family.

The protein localises to the cell membrane. Its function is as follows. Odorant receptor. The protein is Olfactory receptor 4K14 (OR4K14) of Homo sapiens (Human).